A 441-amino-acid polypeptide reads, in one-letter code: Lysine histidine transporter-like 2 (441 aa).

At 1 to 32 (MEKSQSSPTKDASTKQKNVDDWLPITSSRNAK) the chain is on the cytoplasmic side. Residues 33–53 (WWYSAFHNVTAMVGAGVLSLP) form a helical membrane-spanning segment. The Extracellular segment spans residues 54-58 (YAMSN). A helical transmembrane segment spans residues 59-79 (LGWGPGVTIMIMSWLITFYTL). Topologically, residues 80–110 (WQMVQMHEMVPGKRFDRYHELGQHAFGEKLG) are cytoplasmic. A helical membrane pass occupies residues 111–131 (LWIVVPQQLIVEVGVDIVYMV). At 132–155 (TGGKSLKKIHDLLCTDCKNIRTTY) the chain is on the extracellular side. Helical transmembrane passes span 156-176 (WIMIFASIHFVLAHLPNFNSI) and 177-197 (SIVSLAAAVMSLSYSTIAWAT). The Extracellular portion of the chain corresponds to 198–222 (SVKKGVHPNVDYSSRASTTSGNVFN). Residues 223–243 (FLNALGDVAFAYAGHNVVLEI) traverse the membrane as a helical segment. Residues 244–264 (QATIPSTPEKPSKIAMWKGVV) lie on the Cytoplasmic side of the membrane. A helical membrane pass occupies residues 265–285 (VAYIVVAICYFPVAFVCYYIF). Over 286–300 (GNSVDDNILMTLEKP) the chain is Extracellular. The helical transmembrane segment at 301 to 321 (IWLIAIANAFVVVHVIGSYQI) threads the bilayer. The Cytoplasmic portion of the chain corresponds to 322–347 (YAMPVFDMLETFLVKKMMFAPSFKLR). The helical transmembrane segment at 348 to 370 (FITRTLYVAFTMFVAICIPFFGG) threads the bilayer. At 371–373 (LLG) the chain is on the extracellular side. A helical membrane pass occupies residues 374 to 396 (FFGGFAFAPTTYYLPCIMWLCIK). The Cytoplasmic portion of the chain corresponds to 397 to 406 (KPKKYGLSWC). Residues 407 to 427 (INWFCIVVGVILTILAPIGGL) traverse the membrane as a helical segment. The Extracellular portion of the chain corresponds to 428-441 (RTIIISAKNYEFFS).

The protein belongs to the amino acid/polyamine transporter 2 family. Amino acid/auxin permease (AAAP) (TC 2.A.18.2) subfamily.

It is found in the cell membrane. Its function is as follows. Amino acid transporter. This chain is Lysine histidine transporter-like 2, found in Arabidopsis thaliana (Mouse-ear cress).